A 256-amino-acid chain; its full sequence is uncharacterized protein (256 aa).

The 56-residue stretch at 7 to 62 (PAERQKTLLNLISKQSVISINNLVNILGVSHMTVRRDIQKLEEDGKVISVSGGVQL) folds into the HTH deoR-type domain. Positions 24-43 (ISINNLVNILGVSHMTVRRD) form a DNA-binding region, H-T-H motif.

This is an uncharacterized protein from Haemophilus influenzae (strain ATCC 51907 / DSM 11121 / KW20 / Rd).